The sequence spans 159 residues: Mediator of RNA polymerase II transcription subunit 10 (159 aa).

The tract at residues 54 to 77 is disordered; it reads STHTKPQPPSQDDEQKGSANDPLL.

The protein belongs to the Mediator complex subunit 10 family. As to quaternary structure, component of the Mediator complex.

It is found in the nucleus. Functionally, component of the Mediator complex, a coactivator involved in the regulated transcription of nearly all RNA polymerase II-dependent genes. Mediator functions as a bridge to convey information from gene-specific regulatory proteins to the basal RNA polymerase II transcription machinery. Mediator is recruited to promoters by direct interactions with regulatory proteins and serves as a scaffold for the assembly of a functional preinitiation complex with RNA polymerase II and the general transcription factors. The protein is Mediator of RNA polymerase II transcription subunit 10 (nut2) of Aspergillus fumigatus (strain ATCC MYA-4609 / CBS 101355 / FGSC A1100 / Af293) (Neosartorya fumigata).